The primary structure comprises 277 residues: Bis(5'-nucleosyl)-tetraphosphatase, symmetrical (277 aa).

Belongs to the Ap4A hydrolase family.

The enzyme catalyses P(1),P(4)-bis(5'-adenosyl) tetraphosphate + H2O = 2 ADP + 2 H(+). Its function is as follows. Hydrolyzes diadenosine 5',5'''-P1,P4-tetraphosphate to yield ADP. The protein is Bis(5'-nucleosyl)-tetraphosphatase, symmetrical of Bordetella bronchiseptica (strain ATCC BAA-588 / NCTC 13252 / RB50) (Alcaligenes bronchisepticus).